Consider the following 698-residue polypeptide: Vertnin (698 aa).

The protein belongs to the vertnin family.

The protein resides in the nucleus. Its function is as follows. Acts as a transcription factor that regulates development of thoracic vertebrae. This chain is Vertnin (VRTN), found in Sus scrofa (Pig).